A 917-amino-acid chain; its full sequence is MTVGRRLNDEEAIPLTAKEAGSRDSIDSSSTASVSLTLVDGTNHTTAKPSKSAHKGVSRDRYADEKYRDDVEEDWEEDRYIPSNAKPSQRRTQIVFWLLVALCVGGWAVAFLFFVTSPGNTISTTPDTGSGSPDSDVIKPGSPPAGKKIPLDDVLGGAWSPTQHTISWIAGPKGEDGLLLQKSEGGTGPYLHVEDVRNIHGTQSNNKSMVLMKDSVFFVNDERISPEKVWPSPDLKTVLAMTRQKKNWRHSYTGLYWLFDVETQTAQPLDPGAPNGRIQLATWSPTSDAVAFTRDNNLYIRNLTSKTVKAITTDGGANLFYGIPDWVYEEEVFEGNSATWWSLDGKYISFLRTNETTVPEFPVDFYLSSPPDYAPKPGEEAYPYVQQIKYPKAGAPNPTVGLQFYDVEREESFSVDVKDSLNDDDRIIIEVIPGSNGRILVRETNRESYIVKVAAIDATKREGKIIRSDNIDEIDGGWVEPSHTTTYIPSDPASGRPNDGYIDTVIHEGYNHLAYFTPLENPKPKMLTTGKWEVVAAPSGVDLKNNVIYFVATKESPIDRHVYSVKLDGSELQLLKDSEKSAYYDVSFSHGAGYMLLQYQGPKIPWQKLMNSPSNTDSYTEILEENKRLAKLSNEFALPSLHYSSITVDGFKLPVVERRPPNFDETKKYPVLFHLYGGPGSQTVNKKFLVNFQTYVASTLGYIVVTVDGRGTGFNGRKFRCIVRRNLGHYEAYDQIQTAKAWGRKPYVDKTRIAIWGWSYGGFMTLKTLEQDAGETFQYGMAVAPVTDWRYYDSIYTERYMHMPQNNEEGYETASVSNSTALSQNTRFLIMHGSADDNVHFQNTLTLLDKLDIMGVHNYDMHVFPDSNHGIYFHHAYKMVHQRLSDWLVNAFNGEWVRLRDPKPTIIKRVIRRLLHR.

The disordered stretch occupies residues 1 to 75 (MTVGRRLNDE…KYRDDVEEDW (75 aa)). Topologically, residues 1–93 (MTVGRRLNDE…NAKPSQRRTQ (93 aa)) are cytoplasmic. Residues 27–39 (DSSSTASVSLTLV) are compositionally biased toward low complexity. Residues 40–49 (DGTNHTTAKP) show a composition bias toward polar residues. Residues 57 to 69 (VSRDRYADEKYRD) are compositionally biased toward basic and acidic residues. Residues 94–114 (IVFWLLVALCVGGWAVAFLFF) form a helical; Signal-anchor for type II membrane protein membrane-spanning segment. Residues 115–917 (VTSPGNTIST…KRVIRRLLHR (803 aa)) lie on the Vacuolar side of the membrane. Positions 124–133 (TTPDTGSGSP) are enriched in polar residues. Residues 124–150 (TTPDTGSGSPDSDVIKPGSPPAGKKIP) are disordered. N-linked (GlcNAc...) asparagine glycosylation is found at Asn206, Asn302, and Asn354. The active-site Charge relay system is Ser759. N-linked (GlcNAc...) asparagine glycosylation occurs at Asn818. Catalysis depends on charge relay system residues Asp836 and His869.

It belongs to the peptidase S9B family.

The protein localises to the vacuole membrane. It carries out the reaction Release of an N-terminal dipeptide, Xaa-Yaa-|-Zaa-, from a polypeptide, preferentially when Yaa is Pro, provided Zaa is neither Pro nor hydroxyproline.. Type IV dipeptidyl-peptidase which removes N-terminal dipeptides sequentially from polypeptides having unsubstituted N-termini provided that the penultimate residue is proline. In Arthroderma gypseum (strain ATCC MYA-4604 / CBS 118893) (Microsporum gypseum), this protein is Probable dipeptidyl-aminopeptidase B (DAPB).